The chain runs to 122 residues: Small ribosomal subunit protein uS13 (122 aa).

Positions 95-122 (SLPVRGQRTHTNARTRKGPAKSIAGKKK) are disordered.

It belongs to the universal ribosomal protein uS13 family. In terms of assembly, part of the 30S ribosomal subunit. Forms a loose heterodimer with protein S19. Forms two bridges to the 50S subunit in the 70S ribosome.

Located at the top of the head of the 30S subunit, it contacts several helices of the 16S rRNA. In the 70S ribosome it contacts the 23S rRNA (bridge B1a) and protein L5 of the 50S subunit (bridge B1b), connecting the 2 subunits; these bridges are implicated in subunit movement. Contacts the tRNAs in the A and P-sites. This Mesorhizobium japonicum (strain LMG 29417 / CECT 9101 / MAFF 303099) (Mesorhizobium loti (strain MAFF 303099)) protein is Small ribosomal subunit protein uS13.